Reading from the N-terminus, the 82-residue chain is uncharacterized protein (82 aa).

This is an uncharacterized protein from Ictaluridae (bullhead catfishes).